A 452-amino-acid polypeptide reads, in one-letter code: Chromosomal replication initiator protein DnaA (452 aa).

A domain I, interacts with DnaA modulators region spans residues Met1–Ala85. Positions Ala85–Ser115 are domain II. The interval His116–Ala332 is domain III, AAA+ region. Gly160, Gly162, Lys163, and Thr164 together coordinate ATP. The tract at residues His333–Ser452 is domain IV, binds dsDNA.

The protein belongs to the DnaA family. Oligomerizes as a right-handed, spiral filament on DNA at oriC.

It localises to the cytoplasm. Its function is as follows. Plays an essential role in the initiation and regulation of chromosomal replication. ATP-DnaA binds to the origin of replication (oriC) to initiate formation of the DNA replication initiation complex once per cell cycle. Binds the DnaA box (a 9 base pair repeat at the origin) and separates the double-stranded (ds)DNA. Forms a right-handed helical filament on oriC DNA; dsDNA binds to the exterior of the filament while single-stranded (ss)DNA is stabiized in the filament's interior. The ATP-DnaA-oriC complex binds and stabilizes one strand of the AT-rich DNA unwinding element (DUE), permitting loading of DNA polymerase. After initiation quickly degrades to an ADP-DnaA complex that is not apt for DNA replication. Binds acidic phospholipids. The protein is Chromosomal replication initiator protein DnaA of Legionella pneumophila (strain Paris).